Consider the following 64-residue polypeptide: Putative neurotoxin-H (64 aa).

Positions 1 to 19 (MYATVTVTVLLLISSGIFC) are cleaved as a signal peptide. 3 cysteine pairs are disulfide-bonded: cysteine 25-cysteine 45, cysteine 32-cysteine 54, and cysteine 36-cysteine 56.

In terms of tissue distribution, expressed by the venom gland.

The protein localises to the secreted. The polypeptide is Putative neurotoxin-H (Lychas mucronatus (Chinese swimming scorpion)).